The following is a 117-amino-acid chain: UPF0122 protein Teth39_1278 (117 aa).

This sequence belongs to the UPF0122 family.

In terms of biological role, might take part in the signal recognition particle (SRP) pathway. This is inferred from the conservation of its genetic proximity to ftsY/ffh. May be a regulatory protein. The chain is UPF0122 protein Teth39_1278 from Thermoanaerobacter pseudethanolicus (strain ATCC 33223 / 39E) (Clostridium thermohydrosulfuricum).